Consider the following 72-residue polypeptide: Sec-independent protein translocase protein TatA (72 aa).

Residues 1-21 (MLGGISIWQLLIVLAILVLIF) traverse the membrane as a helical segment.

This sequence belongs to the TatA/E family. In terms of assembly, the Tat system comprises two distinct complexes: a TatABC complex, containing multiple copies of TatA, TatB and TatC subunits, and a separate TatA complex, containing only TatA subunits. Substrates initially bind to the TatABC complex, which probably triggers association of the separate TatA complex to form the active translocon.

It localises to the cell inner membrane. Part of the twin-arginine translocation (Tat) system that transports large folded proteins containing a characteristic twin-arginine motif in their signal peptide across membranes. TatA could form the protein-conducting channel of the Tat system. This chain is Sec-independent protein translocase protein TatA, found in Marinomonas sp. (strain MWYL1).